Consider the following 442-residue polypeptide: MNELEQWRKDPLVIKLMATEEVFWLNPHIDSFKSAVRKLSLHEDDVKDAEKRLDRFAPYIAKVFPGTNQAHGMIESPLVQIPSMKQSLEQKYLQPITGNLLLKCDSHLPISGSIKARGGIYEVLKHAEQLALQHGLLTVQDDYSILDSETCRDFFANYSIAVGSTGNLGLSIGIISAKLGFNVSVHMSADAKQWKKDLLRSKNVNVIEYEDDYSQAVEEGRREAEQDPTCYFVDDEQSQDLFLGYAVAAFRLKKQLAEQKITVDESHPLFVYLPCGVGGAPGGITFGLKLLFEDHVHCFFAEPTHSPSMLLGLLTGLHERISVQEIGLDNRTEADGLAVGRPSRLVSRLMKPLLSGSFTIDDDKLFTLLKELADAEGLFLEPSALAGMLGPIKLVQEGNHYLKANNLAEKMNNATHIIWGTGGSMVPEEEMMAYYRRGGTIK.

Lys115 is subject to N6-(pyridoxal phosphate)lysine.

The protein belongs to the serine/threonine dehydratase family. DsdA subfamily. Pyridoxal 5'-phosphate serves as cofactor.

The catalysed reaction is D-serine = pyruvate + NH4(+). The sequence is that of Probable D-serine dehydratase from Halalkalibacterium halodurans (strain ATCC BAA-125 / DSM 18197 / FERM 7344 / JCM 9153 / C-125) (Bacillus halodurans).